Consider the following 443-residue polypeptide: MNKAIKVSLYISFVLIICALSKNIMMLNTSDFGRAIKPLIEDIPAFTYDLPLLYKLKGHIDSIDSYEYISSYSYILYTYVLFISIFTEYLDARVLSLFLKVIYIYSLYAIFTSYIKTERYVTLFTFFILAFLMCSSSTLSMFASFYQEQIVIIFLPFLVYSLTCKNNKSMLLLFFSLLIISTAKNQFILTPLIVYSYYIFFDRHKLIIKSVICVVCLLASIFAISYSKGVVELNKYHATYFGSYLYMKNNGYKMPSYVDDKCVGLDAWGNKFDISFGATPTEVGTECFESHKDETFSNALFLLVSKPSTIFKLPFDDGVMSQYKENYFHVYKKLHVIYGESNILTTITNIKDNIFKNIRFISLLLFFIASIFIRNNKIKASLFVVSLFGISQFYVSFFGEGYRDLSKHLFGMYFSFDLCLYITVVFLIYKIIQRNQDNSDVKH.

10 helical membrane passes run 7-29 (VSLYISFVLIICALSKNIMMLNT), 68-87 (YISSYSYILYTYVLFISIFT), 94-111 (VLSLFLKVIYIYSLYAIF), 121-143 (VTLFTFFILAFLMCSSSTLSMFA), 150-164 (IVIIFLPFLVYSLTC), 179-201 (IISTAKNQFILTPLIVYSYYIFF), 206-225 (LIIKSVICVVCLLASIFAIS), 358-375 (IRFISLLLFFIASIFIRN), 382-399 (LFVVSLFGISQFYVSFFG), and 409-431 (LFGMYFSFDLCLYITVVFLIYKI).

It localises to the cell membrane. This is an uncharacterized protein from Escherichia coli (strain K12).